Reading from the N-terminus, the 509-residue chain is Maturase K (509 aa).

Belongs to the intron maturase 2 family. MatK subfamily.

The protein resides in the plastid. It localises to the chloroplast. Usually encoded in the trnK tRNA gene intron. Probably assists in splicing its own and other chloroplast group II introns. The polypeptide is Maturase K (Nicotiana acuminata (Acuminate tobacco)).